Reading from the N-terminus, the 508-residue chain is Lysine-specific permease LysP (508 aa).

Helical transmembrane passes span 43 to 63 (SMIA…GDVI), 66 to 86 (AGPF…YFLM), 112 to 132 (PAFG…TVAV), 144 to 164 (WLPD…VFSI), 184 to 204 (ITVV…IMGG), 219 to 239 (FVGG…LLVA), 270 to 290 (IFWR…AIIP), 314 to 334 (VGFS…VVSA), 367 to 387 (IPFI…LTSI), 393 to 413 (FTLL…GIAI), 436 to 456 (AKLF…VTLG), and 467 to 487 (WVQG…YLGY).

The protein belongs to the amino acid-polyamine-organocation (APC) superfamily. Amino acid transporter (AAT) (TC 2.A.3.1) family.

Its subcellular location is the cell membrane. The catalysed reaction is L-lysine(out) + H(+)(out) = L-lysine(in) + H(+)(in). Functionally, permease involved in lysine uptake. In Lactococcus lactis subsp. cremoris (strain MG1363), this protein is Lysine-specific permease LysP.